The chain runs to 165 residues: Growth arrest and DNA damage-inducible protein GADD45 alpha (165 aa).

At Thr2 the chain carries Phosphothreonine.

Belongs to the GADD45 family. As to quaternary structure, interacts with MAPK14. Predominantly monomeric but also forms dimers and other oligomers as concentration increases. Interacts with GADD45GIP1. Interacts weakly with PCNA. Interacts with AURKA, likely to compete with dimerization.

It is found in the nucleus. In T-cells, functions as a regulator of p38 MAPKs by inhibiting p88 phosphorylation and activity. Might affect PCNA interaction with some CDK (cell division protein kinase) complexes; stimulates DNA excision repair in vitro and inhibits entry of cells into S phase. The polypeptide is Growth arrest and DNA damage-inducible protein GADD45 alpha (GADD45A) (Homo sapiens (Human)).